Consider the following 772-residue polypeptide: 5-methyltetrahydropteroyltriglutamate--homocysteine methyltransferase (772 aa).

5-methyltetrahydropteroyltri-L-glutamate is bound by residues 24 to 27 (RELK) and K120. A disordered region spans residues 404–428 (DPAVRSRTAATTDADARRSGPYPER). L-homocysteine-binding positions include 446-448 (IGS) and E499. Residues 446–448 (IGS) and E499 each bind L-methionine. A 5-methyltetrahydropteroyltri-L-glutamate-binding site is contributed by W576. Residue D614 participates in L-homocysteine binding. Position 614 (D614) interacts with L-methionine. E620 contributes to the 5-methyltetrahydropteroyltri-L-glutamate binding site. Zn(2+) is bound by residues H656, C658, and E680. Residue H709 is the Proton donor of the active site. Residue C741 coordinates Zn(2+).

The protein belongs to the vitamin-B12 independent methionine synthase family. It depends on Zn(2+) as a cofactor.

It carries out the reaction 5-methyltetrahydropteroyltri-L-glutamate + L-homocysteine = tetrahydropteroyltri-L-glutamate + L-methionine. It functions in the pathway amino-acid biosynthesis; L-methionine biosynthesis via de novo pathway; L-methionine from L-homocysteine (MetE route): step 1/1. Functionally, catalyzes the transfer of a methyl group from 5-methyltetrahydrofolate to homocysteine resulting in methionine formation. This is 5-methyltetrahydropteroyltriglutamate--homocysteine methyltransferase from Streptomyces avermitilis (strain ATCC 31267 / DSM 46492 / JCM 5070 / NBRC 14893 / NCIMB 12804 / NRRL 8165 / MA-4680).